Here is a 457-residue protein sequence, read N- to C-terminus: Serine--tRNA ligase (457 aa).

Residue 252–254 (TAE) coordinates L-serine. ATP is bound by residues 283-285 (RKE) and valine 299. Glutamate 306 lines the L-serine pocket. Residue 370-373 (EMVS) participates in ATP binding. Residue threonine 406 coordinates L-serine.

Belongs to the class-II aminoacyl-tRNA synthetase family. Type-1 seryl-tRNA synthetase subfamily. In terms of assembly, homodimer. The tRNA molecule binds across the dimer.

It is found in the cytoplasm. It catalyses the reaction tRNA(Ser) + L-serine + ATP = L-seryl-tRNA(Ser) + AMP + diphosphate + H(+). The enzyme catalyses tRNA(Sec) + L-serine + ATP = L-seryl-tRNA(Sec) + AMP + diphosphate + H(+). The protein operates within aminoacyl-tRNA biosynthesis; selenocysteinyl-tRNA(Sec) biosynthesis; L-seryl-tRNA(Sec) from L-serine and tRNA(Sec): step 1/1. Functionally, catalyzes the attachment of serine to tRNA(Ser). Is also able to aminoacylate tRNA(Sec) with serine, to form the misacylated tRNA L-seryl-tRNA(Sec), which will be further converted into selenocysteinyl-tRNA(Sec). The chain is Serine--tRNA ligase from Saccharolobus solfataricus (strain ATCC 35092 / DSM 1617 / JCM 11322 / P2) (Sulfolobus solfataricus).